Reading from the N-terminus, the 165-residue chain is Mid1-interacting protein 1-like (165 aa).

Residues 46 to 67 (DQESHASVSHNNNNNNEPSFPN) are disordered.

The protein belongs to the SPOT14 family.

It localises to the nucleus. It is found in the cytoplasm. The protein localises to the cytoskeleton. Functionally, involved in stabilization of microtubules. May play a role in the regulation of lipogenesis. In Danio rerio (Zebrafish), this protein is Mid1-interacting protein 1-like.